A 662-amino-acid chain; its full sequence is DNA ligase (662 aa).

NAD(+) contacts are provided by residues 31–35 (DSEYD), 79–80 (SL), and glutamate 119. Lysine 121 functions as the N6-AMP-lysine intermediate in the catalytic mechanism. 4 residues coordinate NAD(+): arginine 142, glutamate 176, lysine 288, and lysine 312. Cysteine 405, cysteine 408, cysteine 421, and cysteine 427 together coordinate Zn(2+). Positions 583–662 (NIEKKLDNLT…DELNSFLDNL (80 aa)) constitute a BRCT domain.

The protein belongs to the NAD-dependent DNA ligase family. LigA subfamily. Requires Mg(2+) as cofactor. Mn(2+) is required as a cofactor.

The enzyme catalyses NAD(+) + (deoxyribonucleotide)n-3'-hydroxyl + 5'-phospho-(deoxyribonucleotide)m = (deoxyribonucleotide)n+m + AMP + beta-nicotinamide D-nucleotide.. DNA ligase that catalyzes the formation of phosphodiester linkages between 5'-phosphoryl and 3'-hydroxyl groups in double-stranded DNA using NAD as a coenzyme and as the energy source for the reaction. It is essential for DNA replication and repair of damaged DNA. The protein is DNA ligase of Finegoldia magna (strain ATCC 29328 / DSM 20472 / WAL 2508) (Peptostreptococcus magnus).